A 416-amino-acid polypeptide reads, in one-letter code: uncharacterized protein (416 aa).

The Zn(2+) site is built by His29, Asp31, Glu144, His215, and His236.

This sequence belongs to the metallo-dependent hydrolases superfamily. Peptidase M19 family. Zn(2+) is required as a cofactor.

The catalysed reaction is an L-aminoacyl-L-amino acid + H2O = 2 an L-alpha-amino acid. This is an uncharacterized protein from Schizosaccharomyces pombe (strain 972 / ATCC 24843) (Fission yeast).